The following is a 455-amino-acid chain: tRNA modification GTPase MnmE (455 aa).

3 residues coordinate (6S)-5-formyl-5,6,7,8-tetrahydrofolate: R26, E86, and R125. Positions 222-376 (GLKTAIIGRP…VEEKINQIFF (155 aa)) constitute a TrmE-type G domain. Residue N232 coordinates K(+). Residues 232–237 (NVGKSS), 251–257 (TDIAGTT), and 276–279 (DTAG) each bind GTP. S236 is a Mg(2+) binding site. K(+) is bound by residues T251, I253, and T256. T257 serves as a coordination point for Mg(2+). Residue K455 coordinates (6S)-5-formyl-5,6,7,8-tetrahydrofolate.

Belongs to the TRAFAC class TrmE-Era-EngA-EngB-Septin-like GTPase superfamily. TrmE GTPase family. In terms of assembly, homodimer. Heterotetramer of two MnmE and two MnmG subunits. K(+) is required as a cofactor.

It is found in the cytoplasm. In terms of biological role, exhibits a very high intrinsic GTPase hydrolysis rate. Involved in the addition of a carboxymethylaminomethyl (cmnm) group at the wobble position (U34) of certain tRNAs, forming tRNA-cmnm(5)s(2)U34. This Lactococcus lactis subsp. cremoris (strain SK11) protein is tRNA modification GTPase MnmE.